A 537-amino-acid chain; its full sequence is Cytochrome P450 27C1 (537 aa).

A heme-binding site is contributed by cysteine 483.

The protein belongs to the cytochrome P450 family. The cofactor is heme. As to expression, expressed in the dorsal third of retinal pigment epithelium, but not in the ventral counterpart (at protein level).

The protein localises to the membrane. It catalyses the reaction all-trans-retinol + 2 reduced [adrenodoxin] + O2 + 2 H(+) = all-trans-3,4-didehydroretinol + 2 oxidized [adrenodoxin] + 2 H2O. Efficiently catalyzes the conversion of all-trans retinol (also called vitamin A1, the precursor of 11-cis retinal) to 3,4-didehydroretinol (also called vitamin A2, the precursor of 11-cis 3,4-didehydroretinal), also acts on all-trans retinal and all-trans retinoic acid. The replacement of 11-cis retinal chromophore in photopigments with 11-cis 3,4-didehydroretinal enhances sensitivity to long-wavelength light. This may improve vision in fresh water which is often turbid. The chain is Cytochrome P450 27C1 (cyp27c1) from Aquarana catesbeiana (American bullfrog).